The following is a 352-amino-acid chain: Probable dual-specificity RNA methyltransferase RlmN (352 aa).

Glu93 acts as the Proton acceptor in catalysis. One can recognise a Radical SAM core domain in the interval 99-332; sequence TAKRLTVCVS…ATVRQTRGLD (234 aa). The cysteines at positions 106 and 337 are disulfide-linked. Cys113, Cys117, and Cys120 together coordinate [4Fe-4S] cluster. S-adenosyl-L-methionine contacts are provided by residues 160-161, Ser190, 213-215, and Asn294; these read GE and SLH. Cys337 acts as the S-methylcysteine intermediate in catalysis.

This sequence belongs to the radical SAM superfamily. RlmN family. Requires [4Fe-4S] cluster as cofactor.

It is found in the cytoplasm. It catalyses the reaction adenosine(2503) in 23S rRNA + 2 reduced [2Fe-2S]-[ferredoxin] + 2 S-adenosyl-L-methionine = 2-methyladenosine(2503) in 23S rRNA + 5'-deoxyadenosine + L-methionine + 2 oxidized [2Fe-2S]-[ferredoxin] + S-adenosyl-L-homocysteine. It carries out the reaction adenosine(37) in tRNA + 2 reduced [2Fe-2S]-[ferredoxin] + 2 S-adenosyl-L-methionine = 2-methyladenosine(37) in tRNA + 5'-deoxyadenosine + L-methionine + 2 oxidized [2Fe-2S]-[ferredoxin] + S-adenosyl-L-homocysteine. In terms of biological role, specifically methylates position 2 of adenine 2503 in 23S rRNA and position 2 of adenine 37 in tRNAs. The protein is Probable dual-specificity RNA methyltransferase RlmN of Synechococcus sp. (strain JA-2-3B'a(2-13)) (Cyanobacteria bacterium Yellowstone B-Prime).